We begin with the raw amino-acid sequence, 457 residues long: Chromosomal replication initiator protein DnaA (457 aa).

Residues 1–77 (MDTNNNIEKE…EILSQNKVGM (77 aa)) form a domain I, interacts with DnaA modulators region. Positions 77 to 108 (MHLAHSVDVRIEVAPKIQVNAQSNINYKATKT) are domain II. Residues 109–323 (SVKDSYTFEN…GAIIKISVNA (215 aa)) are domain III, AAA+ region. ATP contacts are provided by Gly153, Gly155, Lys156, and Thr157. The interval 324–457 (NLMNATIDLN…DKKTAFNSSE (134 aa)) is domain IV, binds dsDNA.

Belongs to the DnaA family. Oligomerizes as a right-handed, spiral filament on DNA at oriC.

The protein localises to the cytoplasm. Plays an essential role in the initiation and regulation of chromosomal replication. ATP-DnaA binds to the origin of replication (oriC) to initiate formation of the DNA replication initiation complex once per cell cycle. Binds the DnaA box (a 9 base pair repeat at the origin) and separates the double-stranded (ds)DNA. Forms a right-handed helical filament on oriC DNA; dsDNA binds to the exterior of the filament while single-stranded (ss)DNA is stabiized in the filament's interior. The ATP-DnaA-oriC complex binds and stabilizes one strand of the AT-rich DNA unwinding element (DUE), permitting loading of DNA polymerase. After initiation quickly degrades to an ADP-DnaA complex that is not apt for DNA replication. Binds acidic phospholipids. This is Chromosomal replication initiator protein DnaA from Helicobacter pylori (strain J99 / ATCC 700824) (Campylobacter pylori J99).